Consider the following 301-residue polypeptide: Inosose dehydratase (301 aa).

It belongs to the IolE/MocC family. Requires glutathione as cofactor. It depends on Co(2+) as a cofactor. Mn(2+) is required as a cofactor.

The enzyme catalyses scyllo-inosose = 3D-3,5/4-trihydroxycyclohexane-1,2-dione + H2O. Its function is as follows. Catalyzes the dehydration of inosose (2-keto-myo-inositol, 2KMI or 2,4,6/3,5-pentahydroxycyclohexanone) to 3D-(3,5/4)-trihydroxycyclohexane-1,2-dione (D-2,3-diketo-4-deoxy-epi-inositol). The chain is Inosose dehydratase from Salmonella typhimurium (strain LT2 / SGSC1412 / ATCC 700720).